An 838-amino-acid chain; its full sequence is U1 SNP1-associating protein 1 (838 aa).

Topologically, residues Met-1 to Leu-536 are cytoplasmic. The segment at His-31 to Phe-240 is required for ERAD-L function. A Ubiquitin-like domain is found at Glu-259–Asn-318. Positions Asn-319–Cys-418 are important for HRD1 oligomer formation. An interaction with HRD1 region spans residues Gln-345–Pro-535. 3 positions are modified to phosphoserine: Ser-374, Ser-376, and Ser-379. Positions Ser-437–Ser-490 are required for ERAD-L function and HRD1 oligomer formation. The chain crosses the membrane as a helical span at residues Leu-537–Leu-559. Residues Glu-560–Ser-563 are Extracellular-facing. A helical transmembrane segment spans residues Phe-564–Trp-583. Residues Asn-584 to Asp-838 lie on the Cytoplasmic side of the membrane. The interval Asn-584 to Asp-838 is interaction with DER1. Residues Ala-795–Asp-838 are disordered. The span at Glu-809–Pro-823 shows a compositional bias: acidic residues.

Component of the HRD1 ubiquitin ligase complex which contains the E3 ligase HRD1, its cofactors HRD3, USA1 and DER1, substrate recruiting factor YOS9 and CDC48-binding protein UBX2. Within the complex, interacts directly with HRD1 (via N-terminus) and DER1 (via C-terminus) and indirectly with HRD3. In ERAD-L, HRD3 and YOS9 jointly bind misfolded glycoproteins in the endoplasmic reticulum (ER) lumen. Movement of ERAD-L substrates through the ER membrane is facilitated by HRD1 and DER1 which have lateral gates facing each other and which distort the membrane region between the lateral gates, making it much thinner than a normal phospholipid bilayer. Substrates insert into the membrane as a hairpin loop with one strand interacting with DER1 and the other with HRD1. The HRD1 complex interacts with the heterotrimeric CDC48-NPL4-UFD1 ATPase complex which is recruited by UBX2 via its interaction with CDC48 and which moves ubiquitinated substrates to the cytosol for targeting to the proteasome.

The protein localises to the endoplasmic reticulum membrane. Functionally, scaffold protein of the endoplasmic reticulum-associated degradation (ERAD) (also known as endoplasmic reticulum quality control, ERQC) pathway involved in ubiquitin-dependent degradation of misfolded endoplasmic reticulum proteins. Component of the HRD1 ubiquitin ligase complex, which is part of the ERAD-L and ERAD-M pathways responsible for the rapid degradation of soluble lumenal and membrane proteins with misfolded lumenal domains (ERAD-L), or ER-membrane proteins with misfolded transmembrane domains (ERAD-M). Has multiple functions in ERAD including recruitment of DER1 to the HRD1 ubiquitin ligase, and regulation of HRD1 activity. Involved in oligomerization of HRD1 and in HRD1 autoubiquitination and degradation. The sequence is that of U1 SNP1-associating protein 1 (USA1) from Saccharomyces cerevisiae (strain ATCC 204508 / S288c) (Baker's yeast).